Reading from the N-terminus, the 272-residue chain is uncharacterized protein (272 aa).

Residues aspartate 71 and glutamate 163 contribute to the active site.

It belongs to the glycosyl hydrolase 25 family.

This is an uncharacterized protein from Escherichia coli O6:H1 (strain CFT073 / ATCC 700928 / UPEC).